The sequence spans 321 residues: Tetraketide alpha-pyrone reductase 2 (321 aa).

Ser-2 is modified (N-acetylserine). Residues 4–28 (YLVT…GHTV), Lys-40, and Tyr-160 each bind NADP(+).

This sequence belongs to the NAD(P)-dependent epimerase/dehydratase family. Dihydroflavonol-4-reductase subfamily.

It localises to the cytoplasm. Functionally, may be involved in the biosynthesis of hydroxylated tetraketide compounds that serve as sporopollenin precursors (the main constituents of exine). Acts on tetraketide alpha-pyrones and reduces the carbonyl function on the tetraketide alkyl chain to a secondary alcohol function. The sequence is that of Tetraketide alpha-pyrone reductase 2 (TKPR2) from Arabidopsis thaliana (Mouse-ear cress).